Reading from the N-terminus, the 719-residue chain is Endonuclease MutS2 (719 aa).

Residue 273–280 (GPNTGGKT) coordinates ATP. The 76-residue stretch at 644–719 (LDLRGYRYED…GFGVTVATLK (76 aa)) folds into the Smr domain.

It belongs to the DNA mismatch repair MutS family. MutS2 subfamily. Homodimer. Binds to stalled ribosomes, contacting rRNA.

Its function is as follows. Endonuclease that is involved in the suppression of homologous recombination and thus may have a key role in the control of bacterial genetic diversity. In terms of biological role, acts as a ribosome collision sensor, splitting the ribosome into its 2 subunits. Detects stalled/collided 70S ribosomes which it binds and splits by an ATP-hydrolysis driven conformational change. Acts upstream of the ribosome quality control system (RQC), a ribosome-associated complex that mediates the extraction of incompletely synthesized nascent chains from stalled ribosomes and their subsequent degradation. Probably generates substrates for RQC. The sequence is that of Endonuclease MutS2 from Staphylococcus aureus.